We begin with the raw amino-acid sequence, 154 residues long: Small ribosomal subunit protein uS15 (154 aa).

Residues 1–10 (MARMHSRRRG) show a composition bias toward basic residues. The disordered stretch occupies residues 1 to 32 (MARMHSRRRGSSGSDRPTADEPPEWSEVDEDA). A compositionally biased stretch (acidic residues) spans 21–32 (EPPEWSEVDEDA).

It belongs to the universal ribosomal protein uS15 family. In terms of assembly, part of the 30S ribosomal subunit.

This chain is Small ribosomal subunit protein uS15, found in Natronomonas pharaonis (strain ATCC 35678 / DSM 2160 / CIP 103997 / JCM 8858 / NBRC 14720 / NCIMB 2260 / Gabara) (Halobacterium pharaonis).